Reading from the N-terminus, the 255-residue chain is Type III pantothenate kinase (255 aa).

D6 to E13 is a binding site for ATP. Substrate-binding positions include Y100 and G107 to R110. Catalysis depends on D109, which acts as the Proton acceptor. D129 is a binding site for K(+). ATP is bound at residue T132. A substrate-binding site is contributed by T184.

The protein belongs to the type III pantothenate kinase family. In terms of assembly, homodimer. NH4(+) serves as cofactor. Requires K(+) as cofactor.

Its subcellular location is the cytoplasm. The enzyme catalyses (R)-pantothenate + ATP = (R)-4'-phosphopantothenate + ADP + H(+). Its pathway is cofactor biosynthesis; coenzyme A biosynthesis; CoA from (R)-pantothenate: step 1/5. Its function is as follows. Catalyzes the phosphorylation of pantothenate (Pan), the first step in CoA biosynthesis. This chain is Type III pantothenate kinase, found in Persephonella marina (strain DSM 14350 / EX-H1).